A 482-amino-acid polypeptide reads, in one-letter code: Probable cytosol aminopeptidase (482 aa).

Residues Lys-251 and Asp-256 each coordinate Mn(2+). The active site involves Lys-263. Asp-274, Asp-333, and Glu-335 together coordinate Mn(2+). Arg-337 is a catalytic residue.

This sequence belongs to the peptidase M17 family. Mn(2+) is required as a cofactor.

The protein localises to the cytoplasm. It catalyses the reaction Release of an N-terminal amino acid, Xaa-|-Yaa-, in which Xaa is preferably Leu, but may be other amino acids including Pro although not Arg or Lys, and Yaa may be Pro. Amino acid amides and methyl esters are also readily hydrolyzed, but rates on arylamides are exceedingly low.. It carries out the reaction Release of an N-terminal amino acid, preferentially leucine, but not glutamic or aspartic acids.. Functionally, presumably involved in the processing and regular turnover of intracellular proteins. Catalyzes the removal of unsubstituted N-terminal amino acids from various peptides. This is Probable cytosol aminopeptidase from Acinetobacter baumannii (strain AB307-0294).